The primary structure comprises 161 residues: Large ribosomal subunit protein uL30m (161 aa).

The N-terminal 34 residues, 1–34, are a transit peptide targeting the mitochondrion; the sequence is MAGILRLVVQWPPGRLQTVTKGVESLICTDWIRH.

The protein belongs to the universal ribosomal protein uL30 family. In terms of assembly, component of the mitochondrial large ribosomal subunit (mt-LSU). Mature mammalian 55S mitochondrial ribosomes consist of a small (28S) and a large (39S) subunit. The 28S small subunit contains a 12S ribosomal RNA (12S mt-rRNA) and 30 different proteins. The 39S large subunit contains a 16S rRNA (16S mt-rRNA), a copy of mitochondrial valine transfer RNA (mt-tRNA(Val)), which plays an integral structural role, and 52 different proteins.

It localises to the mitochondrion. The chain is Large ribosomal subunit protein uL30m (MRPL30) from Homo sapiens (Human).